The following is a 254-amino-acid chain: 5-oxoprolinase subunit A (254 aa).

Belongs to the LamB/PxpA family. As to quaternary structure, forms a complex composed of PxpA, PxpB and PxpC.

The catalysed reaction is 5-oxo-L-proline + ATP + 2 H2O = L-glutamate + ADP + phosphate + H(+). In terms of biological role, catalyzes the cleavage of 5-oxoproline to form L-glutamate coupled to the hydrolysis of ATP to ADP and inorganic phosphate. This chain is 5-oxoprolinase subunit A, found in Burkholderia vietnamiensis (strain G4 / LMG 22486) (Burkholderia cepacia (strain R1808)).